Reading from the N-terminus, the 77-residue chain is Translation initiation factor IF-1, chloroplastic (77 aa).

The S1-like domain occupies 1-71 (MKEQKWIHEG…TRGRIIYRLR (71 aa)).

It belongs to the IF-1 family. In terms of assembly, component of the 30S ribosomal translation pre-initiation complex which assembles on the 30S ribosome in the order IF-2 and IF-3, IF-1 and N-formylmethionyl-tRNA(fMet); mRNA recruitment can occur at any time during PIC assembly.

Its subcellular location is the plastid. It is found in the chloroplast. In terms of biological role, one of the essential components for the initiation of protein synthesis. Stabilizes the binding of IF-2 and IF-3 on the 30S subunit to which N-formylmethionyl-tRNA(fMet) subsequently binds. Helps modulate mRNA selection, yielding the 30S pre-initiation complex (PIC). Upon addition of the 50S ribosomal subunit IF-1, IF-2 and IF-3 are released leaving the mature 70S translation initiation complex. This chain is Translation initiation factor IF-1, chloroplastic, found in Nandina domestica (Heavenly bamboo).